Reading from the N-terminus, the 102-residue chain is MAKEKIRIRLKAYDHRILDQSADKIVETAKRSGATVSGPIPLPTEKTVYTILRAVHKYKDSREQFEMRTHKRLIDIVSPTPQTVDSLMRLDLPSGVDIEIKL.

Belongs to the universal ribosomal protein uS10 family. As to quaternary structure, part of the 30S ribosomal subunit.

Involved in the binding of tRNA to the ribosomes. This Bacillus anthracis (strain A0248) protein is Small ribosomal subunit protein uS10.